The primary structure comprises 374 residues: Glutamate 5-kinase (374 aa).

Lysine 8 lines the ATP pocket. Residues serine 49, aspartate 136, and asparagine 148 each coordinate substrate. Residues 168–169 (TD) and 211–217 (TGGMQTK) contribute to the ATP site. The PUA domain occupies 276 to 354 (QGILTLDDGA…TQIRQILGYG (79 aa)).

It belongs to the glutamate 5-kinase family.

The protein localises to the cytoplasm. The catalysed reaction is L-glutamate + ATP = L-glutamyl 5-phosphate + ADP. It participates in amino-acid biosynthesis; L-proline biosynthesis; L-glutamate 5-semialdehyde from L-glutamate: step 1/2. Catalyzes the transfer of a phosphate group to glutamate to form L-glutamate 5-phosphate. This chain is Glutamate 5-kinase, found in Picosynechococcus sp. (strain ATCC 27264 / PCC 7002 / PR-6) (Agmenellum quadruplicatum).